We begin with the raw amino-acid sequence, 88 residues long: Small ribosomal subunit protein uS15 (88 aa).

This sequence belongs to the universal ribosomal protein uS15 family. In terms of assembly, part of the 30S ribosomal subunit. Forms a bridge to the 50S subunit in the 70S ribosome, contacting the 23S rRNA.

One of the primary rRNA binding proteins, it binds directly to 16S rRNA where it helps nucleate assembly of the platform of the 30S subunit by binding and bridging several RNA helices of the 16S rRNA. In terms of biological role, forms an intersubunit bridge (bridge B4) with the 23S rRNA of the 50S subunit in the ribosome. The protein is Small ribosomal subunit protein uS15 of Geotalea daltonii (strain DSM 22248 / JCM 15807 / FRC-32) (Geobacter daltonii).